A 247-amino-acid chain; its full sequence is Caffeoyl-CoA O-methyltransferase (247 aa).

A substrate-binding site is contributed by Lys21. S-adenosyl-L-methionine contacts are provided by residues Thr63, Glu85, 87–88 (GV), Ser93, Asp111, and Ala140. Residue Asp163 participates in substrate binding. Asp163 serves as a coordination point for a divalent metal cation. Asp165 contacts S-adenosyl-L-methionine. A divalent metal cation contacts are provided by Asp189 and Asn190. Residue Asn194 participates in substrate binding.

This sequence belongs to the class I-like SAM-binding methyltransferase superfamily. Cation-dependent O-methyltransferase family. CCoAMT subfamily. In terms of assembly, homodimer. Ca(2+) serves as cofactor. Mg(2+) is required as a cofactor. Requires Zn(2+) as cofactor.

The catalysed reaction is (E)-caffeoyl-CoA + S-adenosyl-L-methionine = (E)-feruloyl-CoA + S-adenosyl-L-homocysteine + H(+). It participates in aromatic compound metabolism; phenylpropanoid biosynthesis. Functionally, methylates caffeoyl-CoA to feruloyl-CoA and 5-hydroxyferuloyl-CoA to sinapoyl-CoA. Plays a role in the synthesis of feruloylated polysaccharides. Involved in the reinforcement of the plant cell wall. Also involved in the responding to wounding or pathogen challenge by the increased formation of cell wall-bound ferulic acid polymers. The protein is Caffeoyl-CoA O-methyltransferase (CCOMT) of Medicago sativa (Alfalfa).